The following is a 392-amino-acid chain: ABSCISIC ACID-INSENSITIVE 5-like protein 4 (392 aa).

The disordered stretch occupies residues 1 to 22 (MGTHIDINNLGGDTSRGNESKP). Phosphoserine is present on residues serine 28, serine 50, and serine 96. Threonine 135 is subject to Phosphothreonine. The segment at 266 to 297 (NMGGAGGTVTATSPGTSSAENNTWSSPVPYVF) is disordered. The segment covering 274–291 (VTATSPGTSSAENNTWSS) has biased composition (polar residues). One can recognise a bZIP domain in the interval 311 to 374 (VERRQKRMIK…NSELKEFSKQ (64 aa)). A basic motif region spans residues 313–332 (RRQKRMIKNRESAARSRARK). Residues 339–360 (LEAEIESLKLVNQDLQKKQAEI) form a leucine-zipper region.

Belongs to the bZIP family. ABI5 subfamily. As to quaternary structure, DNA-binding heterodimer. Interacts with ABI3 and the AFP proteins AFP1, AFP2, AFP3 and AFP4. Phosphorylated by CPK4, CPK11, SRK2D and SRK2I in vitro.

It is found in the nucleus. In terms of biological role, binds to the ABA-responsive element (ABRE). Could participate in abscisic acid-regulated gene expression. The protein is ABSCISIC ACID-INSENSITIVE 5-like protein 4 (ABF1) of Arabidopsis thaliana (Mouse-ear cress).